Here is a 361-residue protein sequence, read N- to C-terminus: Mannonate dehydratase 1 (361 aa).

The protein belongs to the mannonate dehydratase family. The cofactor is Fe(2+). It depends on Mn(2+) as a cofactor.

The catalysed reaction is D-mannonate = 2-dehydro-3-deoxy-D-gluconate + H2O. It participates in carbohydrate metabolism; pentose and glucuronate interconversion. Functionally, catalyzes the dehydration of D-mannonate. The protein is Mannonate dehydratase 1 (uxuA1) of Halalkalibacterium halodurans (strain ATCC BAA-125 / DSM 18197 / FERM 7344 / JCM 9153 / C-125) (Bacillus halodurans).